The chain runs to 141 residues: Large ribosomal subunit protein uL11 (141 aa).

The protein belongs to the universal ribosomal protein uL11 family. In terms of assembly, part of the ribosomal stalk of the 50S ribosomal subunit. Interacts with L10 and the large rRNA to form the base of the stalk. L10 forms an elongated spine to which L12 dimers bind in a sequential fashion forming a multimeric L10(L12)X complex. Post-translationally, one or more lysine residues are methylated.

Its function is as follows. Forms part of the ribosomal stalk which helps the ribosome interact with GTP-bound translation factors. In Clostridium perfringens (strain ATCC 13124 / DSM 756 / JCM 1290 / NCIMB 6125 / NCTC 8237 / Type A), this protein is Large ribosomal subunit protein uL11.